A 325-amino-acid chain; its full sequence is Protease HtpX homolog (325 aa).

A helical membrane pass occupies residues 20-40 (IGYLLGGGGGMMIALVIAVAM). H130 lines the Zn(2+) pocket. E131 is an active-site residue. H134 is a Zn(2+) binding site. 2 helical membrane passes run 145 to 165 (IVAT…FLGG) and 173 to 193 (VMGV…AMIV). E202 serves as a coordination point for Zn(2+). The segment at 288 to 325 (AMTARAAAPSQNSGPWGQRSDNAGGNSNGGSRYRGPWS) is disordered. A compositionally biased stretch (low complexity) spans 306–325 (RSDNAGGNSNGGSRYRGPWS).

The protein belongs to the peptidase M48B family. The cofactor is Zn(2+).

The protein localises to the cell inner membrane. The polypeptide is Protease HtpX homolog (Brucella abortus (strain S19)).